A 63-amino-acid polypeptide reads, in one-letter code: Large ribosomal subunit protein uL30 (63 aa).

Belongs to the universal ribosomal protein uL30 family. Part of the 50S ribosomal subunit.

This is Large ribosomal subunit protein uL30 from Chlorobium chlorochromatii (strain CaD3).